Reading from the N-terminus, the 149-residue chain is Nucleoside diphosphate kinase (149 aa).

The ATP site is built by Lys9, Phe57, Arg85, Thr91, Arg102, and Asn112. The active-site Pros-phosphohistidine intermediate is His115.

This sequence belongs to the NDK family. Mg(2+) is required as a cofactor.

The protein resides in the cytoplasm. It catalyses the reaction a 2'-deoxyribonucleoside 5'-diphosphate + ATP = a 2'-deoxyribonucleoside 5'-triphosphate + ADP. The catalysed reaction is a ribonucleoside 5'-diphosphate + ATP = a ribonucleoside 5'-triphosphate + ADP. Its function is as follows. Major role in the synthesis of nucleoside triphosphates other than ATP. The ATP gamma phosphate is transferred to the NDP beta phosphate via a ping-pong mechanism, using a phosphorylated active-site intermediate. This Methanoculleus marisnigri (strain ATCC 35101 / DSM 1498 / JR1) protein is Nucleoside diphosphate kinase.